Here is a 130-residue protein sequence, read N- to C-terminus: Cyclin-dependent kinase 4 inhibitor B (130 aa).

ANK repeat units lie at residues 5-34 (GSDAGLATAAARGQVETVRQLLEAGADPNA), 38-66 (FGRRPIQVMMMGSAQVAELLLLHGAEPNC), 71-100 (TLTRPVHDAAREGFLDTLMVLHKAGARLDV), and 104-130 (WGRLPVDLAEEQGHRDIARYLHAATGD). Phosphothreonine is present on Thr12.

This sequence belongs to the CDKN2 cyclin-dependent kinase inhibitor family. Heterodimer of CDKN2B with CDK4 or CDK6. Expression abundant in lung, less abundant in testis, barely detectable in liver, and not detectable in neonatal kidney, adult kidney, brain, heart, or spleen.

In terms of biological role, interacts strongly with CDK4 and CDK6. Potent inhibitor. Potential effector of TGF-beta induced cell cycle arrest. The protein is Cyclin-dependent kinase 4 inhibitor B (Cdkn2b) of Rattus norvegicus (Rat).